A 643-amino-acid polypeptide reads, in one-letter code: Pesticidal crystal protein Cry11Aa (643 aa).

It belongs to the delta endotoxin family.

In terms of biological role, promotes colloidosmotic lysis by binding to the midgut epithelial cells of mosquitos. This Bacillus thuringiensis subsp. israelensis protein is Pesticidal crystal protein Cry11Aa (cry11Aa).